The primary structure comprises 438 residues: Citrate synthase (438 aa).

Residues H306 and D364 contribute to the active site.

Belongs to the citrate synthase family.

The enzyme catalyses oxaloacetate + acetyl-CoA + H2O = citrate + CoA + H(+). The protein operates within carbohydrate metabolism; tricarboxylic acid cycle; isocitrate from oxaloacetate: step 1/2. In Bartonella quintana (strain Toulouse) (Rochalimaea quintana), this protein is Citrate synthase (gltA).